The primary structure comprises 199 residues: N-(5'-phosphoribosyl)anthranilate isomerase (199 aa).

It belongs to the TrpF family.

It carries out the reaction N-(5-phospho-beta-D-ribosyl)anthranilate = 1-(2-carboxyphenylamino)-1-deoxy-D-ribulose 5-phosphate. It functions in the pathway amino-acid biosynthesis; L-tryptophan biosynthesis; L-tryptophan from chorismate: step 3/5. This chain is N-(5'-phosphoribosyl)anthranilate isomerase, found in Streptococcus pneumoniae serotype 4 (strain ATCC BAA-334 / TIGR4).